Reading from the N-terminus, the 279-residue chain is Large ribosomal subunit protein uL2 (279 aa).

Residues 223-279 (TVRGSAMNPNDHPHGGGEGRSPVGMDAPRTPWGKRHMGVKTRNNKKSSTSMIVRRRK) are disordered. The span at 254–267 (WGKRHMGVKTRNNK) shows a compositional bias: basic residues.

Belongs to the universal ribosomal protein uL2 family. In terms of assembly, part of the 50S ribosomal subunit. Forms a bridge to the 30S subunit in the 70S ribosome.

Its function is as follows. One of the primary rRNA binding proteins. Required for association of the 30S and 50S subunits to form the 70S ribosome, for tRNA binding and peptide bond formation. It has been suggested to have peptidyltransferase activity; this is somewhat controversial. Makes several contacts with the 16S rRNA in the 70S ribosome. This chain is Large ribosomal subunit protein uL2, found in Ureaplasma parvum serovar 3 (strain ATCC 27815 / 27 / NCTC 11736).